A 252-amino-acid polypeptide reads, in one-letter code: Small ribosomal subunit protein uS2 (252 aa).

This sequence belongs to the universal ribosomal protein uS2 family.

In Chlorobium phaeobacteroides (strain DSM 266 / SMG 266 / 2430), this protein is Small ribosomal subunit protein uS2.